The following is a 150-amino-acid chain: 3-hydroxyacyl-[acyl-carrier-protein] dehydratase FabZ (150 aa).

Histidine 51 is an active-site residue.

It belongs to the thioester dehydratase family. FabZ subfamily.

It localises to the cytoplasm. It carries out the reaction a (3R)-hydroxyacyl-[ACP] = a (2E)-enoyl-[ACP] + H2O. Its function is as follows. Involved in unsaturated fatty acids biosynthesis. Catalyzes the dehydration of short chain beta-hydroxyacyl-ACPs and long chain saturated and unsaturated beta-hydroxyacyl-ACPs. This Legionella pneumophila (strain Paris) protein is 3-hydroxyacyl-[acyl-carrier-protein] dehydratase FabZ.